We begin with the raw amino-acid sequence, 152 residues long: MVKAVAVLASSEGVKGTIFFSQEGDGPTSVTGSVSGLKPGLHGFHVHALGDTTNGCMSTGPHFNPTGKEHGAPQDENRHAGDLGNITAGADGVANVNVSDSQIPLTGAHSIIGRAVVVHADPDDLGKGGHELSKTTGNAGGRVACGIIGLQG.

Cu cation-binding residues include His45, His47, and His62. Cys56 and Cys145 are disulfide-bonded. His62, His70, His79, and Asp82 together coordinate Zn(2+). His119 contributes to the Cu cation binding site.

The protein belongs to the Cu-Zn superoxide dismutase family. Homodimer. Requires Cu cation as cofactor. It depends on Zn(2+) as a cofactor.

It is found in the cytoplasm. The catalysed reaction is 2 superoxide + 2 H(+) = H2O2 + O2. Its function is as follows. Destroys radicals which are normally produced within the cells and which are toxic to biological systems. In Oryza sativa subsp. japonica (Rice), this protein is Superoxide dismutase [Cu-Zn] 2 (SODCC2).